The following is a 777-amino-acid chain: Reticulon-1 (777 aa).

Disordered stretches follow at residues 1–77 (MAAP…ETAS), 129–182 (NGHI…ILAD), 198–245 (TRPQ…PVEG), and 293–573 (ATHE…IPGP). 2 positions are modified to phosphoserine: Ser13 and Ser68. The span at 199–233 (RPQEAKGQEEQSPGLEDKDLDFKDKDSEVSTKPEG) shows a compositional bias: basic and acidic residues. Residues Ser210, Ser241, and Ser325 each carry the phosphoserine modification. The segment covering 326–339 (PGSVTPPSSGTEPS) has biased composition (low complexity). Ser348 and Ser350 each carry phosphoserine. Over residues 393-406 (IPSSLDQEASSAES) the composition is skewed to polar residues. Ser485 is subject to Phosphoserine. Residues 495 to 510 (AIREETSSRATEERAP) are compositionally biased toward basic and acidic residues. Residues 525–534 (TPVTLQSRPE) are compositionally biased toward polar residues. Positions 590–777 (AIDLLYWRDI…KIPGAKRHAE (188 aa)) constitute a Reticulon domain. 2 helical membrane passes run 604–624 (IVFGSFLLLLFSLTQFSVVSV) and 706–726 (FAVLMWLLTYVGALFNGLTLL).

As to quaternary structure, interacts with NDRG1. Interacts with BACE1. Interacts with TMEM33. In terms of assembly, interacts with UGCG; regulates the ceramide glucosyltransferase activity of UGCG. In terms of tissue distribution, expressed predominantly in central and peripheral nervous system of newborn and adult rats. Low levels have been also detected in heart, adrenal gland and spleen. Expression of isoform RTN1-B is restricted to particular neuronal types.

It localises to the endoplasmic reticulum membrane. The protein localises to the golgi apparatus membrane. Its function is as follows. Inhibits amyloid precursor protein processing, probably by blocking BACE1 activity. The chain is Reticulon-1 (Rtn1) from Rattus norvegicus (Rat).